A 350-amino-acid polypeptide reads, in one-letter code: Erythronate-4-phosphate dehydrogenase (350 aa).

The substrate site is built by serine 45 and threonine 66. NAD(+) is bound by residues 124–125 (QV), aspartate 144, 203–205 (ASR), and aspartate 226. Arginine 205 is an active-site residue. The active site involves glutamate 231. The active-site Proton donor is histidine 248. Glycine 251 is an NAD(+) binding site.

It belongs to the D-isomer specific 2-hydroxyacid dehydrogenase family. PdxB subfamily. Homodimer.

It is found in the cytoplasm. The catalysed reaction is 4-phospho-D-erythronate + NAD(+) = (R)-3-hydroxy-2-oxo-4-phosphooxybutanoate + NADH + H(+). It functions in the pathway cofactor biosynthesis; pyridoxine 5'-phosphate biosynthesis; pyridoxine 5'-phosphate from D-erythrose 4-phosphate: step 2/5. In terms of biological role, catalyzes the oxidation of erythronate-4-phosphate to 3-hydroxy-2-oxo-4-phosphonooxybutanoate. The sequence is that of Erythronate-4-phosphate dehydrogenase from Legionella pneumophila subsp. pneumophila (strain Philadelphia 1 / ATCC 33152 / DSM 7513).